We begin with the raw amino-acid sequence, 303 residues long: Protoheme IX farnesyltransferase (303 aa).

Transmembrane regions (helical) follow at residues 25–45, 54–74, 104–124, 125–145, 151–171, 179–199, 227–247, 248–268, and 280–300; these read MGLV…AVVM, IPQI…ACAL, LLLL…LLNI, PSGV…SIWS, WNTV…WVAI, AIAL…ALAI, FIWL…GVVF, VVLA…TFKK, and FIYS…VSLL.

This sequence belongs to the UbiA prenyltransferase family. Protoheme IX farnesyltransferase subfamily. As to quaternary structure, interacts with CtaA.

It localises to the cell membrane. It catalyses the reaction heme b + (2E,6E)-farnesyl diphosphate + H2O = Fe(II)-heme o + diphosphate. The protein operates within porphyrin-containing compound metabolism; heme O biosynthesis; heme O from protoheme: step 1/1. Its function is as follows. Converts heme B (protoheme IX) to heme O by substitution of the vinyl group on carbon 2 of heme B porphyrin ring with a hydroxyethyl farnesyl side group. In Staphylococcus aureus (strain Mu3 / ATCC 700698), this protein is Protoheme IX farnesyltransferase.